We begin with the raw amino-acid sequence, 254 residues long: Dihydroorotate dehydrogenase B (NAD(+)), electron transfer subunit (254 aa).

The FAD-binding FR-type domain occupies 1–99 (MLQTEMKVIQ…LGPLGKGFDL (99 aa)). Residues 50-53 (RPIS), 67-69 (LYR), and 74-75 (GT) each bind FAD. [2Fe-2S] cluster contacts are provided by Cys-218, Cys-223, Cys-226, and Cys-241.

The protein belongs to the PyrK family. In terms of assembly, heterotetramer of 2 PyrK and 2 PyrD type B subunits. The cofactor is [2Fe-2S] cluster. FAD serves as cofactor.

The protein operates within pyrimidine metabolism; UMP biosynthesis via de novo pathway; orotate from (S)-dihydroorotate (NAD(+) route): step 1/1. Its function is as follows. Responsible for channeling the electrons from the oxidation of dihydroorotate from the FMN redox center in the PyrD type B subunit to the ultimate electron acceptor NAD(+). The sequence is that of Dihydroorotate dehydrogenase B (NAD(+)), electron transfer subunit from Listeria innocua serovar 6a (strain ATCC BAA-680 / CLIP 11262).